Consider the following 571-residue polypeptide: Proline--tRNA ligase (571 aa).

Belongs to the class-II aminoacyl-tRNA synthetase family. ProS type 1 subfamily. In terms of assembly, homodimer.

The protein resides in the cytoplasm. It catalyses the reaction tRNA(Pro) + L-proline + ATP = L-prolyl-tRNA(Pro) + AMP + diphosphate. Functionally, catalyzes the attachment of proline to tRNA(Pro) in a two-step reaction: proline is first activated by ATP to form Pro-AMP and then transferred to the acceptor end of tRNA(Pro). As ProRS can inadvertently accommodate and process non-cognate amino acids such as alanine and cysteine, to avoid such errors it has two additional distinct editing activities against alanine. One activity is designated as 'pretransfer' editing and involves the tRNA(Pro)-independent hydrolysis of activated Ala-AMP. The other activity is designated 'posttransfer' editing and involves deacylation of mischarged Ala-tRNA(Pro). The misacylated Cys-tRNA(Pro) is not edited by ProRS. This chain is Proline--tRNA ligase, found in Pediococcus pentosaceus (strain ATCC 25745 / CCUG 21536 / LMG 10740 / 183-1w).